Consider the following 232-residue polypeptide: Y-linked testis-specific protein 1 (232 aa).

The protein belongs to the SPIN/STSY family. In terms of tissue distribution, expressed in testis (at protein level).

This Mus musculus (Mouse) protein is Y-linked testis-specific protein 1 (Ssty1).